Consider the following 699-residue polypeptide: Mannan-binding lectin serine protease 1 (699 aa).

The signal sequence occupies residues 1-19 (MRWLLLYYALCFSLSKASA). In terms of domain architecture, CUB 1 spans 20 to 138 (HTVELNNMFG…TGFDAHYMAV (119 aa)). The homodimerization stretch occupies residues 20–184 (HTVELNNMFG…HTDNRTCRVE (165 aa)). Positions 20–184 (HTVELNNMFG…HTDNRTCRVE (165 aa)) are interaction with MBL2. An interaction with FCN2 region spans residues 20–278 (HTVELNNMFG…STQSHSVLIL (259 aa)). N-linked (GlcNAc...) asparagine glycosylation occurs at N49. Ca(2+) is bound by residues E68, D76, D121, S123, D139, V140, and E142. A disulfide bridge links C73 with C91. Positions 139–182 (DVDECKEREDEELSCDHYCHNYIGGYYCSCRFGYILHTDNRTCR) constitute an EGF-like; calcium-binding domain. 4 cysteine pairs are disulfide-bonded: C143–C157, C153–C166, C168–C181, and C185–C212. Ca(2+)-binding residues include N159, Y160, and G163. Residue N159 is modified to (3R)-3-hydroxyasparagine. N-linked (GlcNAc...) (complex) asparagine glycosylation is present at N178. In terms of domain architecture, CUB 2 spans 185-297 (CSDNLFTQRT…RGWRLSYRAA (113 aa)). Ca(2+)-binding residues include E235, D245, D282, and S284. Residues C242 and C260 are joined by a disulfide bond. Sushi domains follow at residues 299-364 (NECP…TCKI) and 365-434 (VDCR…TCLP). 6 disulfide bridges follow: C301–C349, C329–C362, C367–C414, C397–C432, C436–C572, and C475–C491. N385 carries an N-linked (GlcNAc...) (complex) asparagine glycan. N407 carries N-linked (GlcNAc...) asparagine glycosylation. The region spanning 449 to 696 (IFNGRPAQKG…NKDWIQRVTG (248 aa)) is the Peptidase S1 domain. H490 acts as the Charge relay system in catalysis. L533 carries N-linked (GlcNAc) asparagine glycosylation. D552 acts as the Charge relay system in catalysis. The N-linked (GlcNAc) asparagine glycan is linked to E599. 2 disulfide bridges follow: C614–C631 and C642–C672. S646 functions as the Charge relay system in the catalytic mechanism.

This sequence belongs to the peptidase S1 family. In terms of assembly, homodimer. Interacts with the oligomeric lectins MBL2, FCN2 and FCN3; triggers the lectin pathway of complement through activation of C3. Interacts with SERPING1. Interacts with COLEC11; probably triggers the lectin pathway of complement. Post-translationally, the iron and 2-oxoglutarate dependent 3-hydroxylation of aspartate and asparagine is (R) stereospecific within EGF domains. In terms of processing, N-glycosylated. Some N-linked glycan are of the complex-type. Autoproteolytic processing of the proenzyme produces the active enzyme composed on the heavy and the light chain held together by a disulfide bond. Isoform 1 but not isoform 2 is activated through autoproteolytic processing. As to expression, protein of the plasma which is primarily expressed by liver.

The protein localises to the secreted. Inhibited by SERPING1 and A2M. Its function is as follows. Functions in the lectin pathway of complement, which performs a key role in innate immunity by recognizing pathogens through patterns of sugar moieties and neutralizing them. The lectin pathway is triggered upon binding of mannan-binding lectin (MBL) and ficolins to sugar moieties which leads to activation of the associated proteases MASP1 and MASP2. Functions as an endopeptidase and may activate MASP2 or C2 or directly activate C3 the key component of complement reaction. Isoform 2 may have an inhibitory effect on the activation of the lectin pathway of complement or may cleave IGFBP5. Also plays a role in development. The chain is Mannan-binding lectin serine protease 1 (MASP1) from Homo sapiens (Human).